Here is a 494-residue protein sequence, read N- to C-terminus: Aspartyl/glutamyl-tRNA(Asn/Gln) amidotransferase subunit B (494 aa).

The protein belongs to the GatB/GatE family. GatB subfamily. Heterotrimer of A, B and C subunits.

It carries out the reaction L-glutamyl-tRNA(Gln) + L-glutamine + ATP + H2O = L-glutaminyl-tRNA(Gln) + L-glutamate + ADP + phosphate + H(+). It catalyses the reaction L-aspartyl-tRNA(Asn) + L-glutamine + ATP + H2O = L-asparaginyl-tRNA(Asn) + L-glutamate + ADP + phosphate + 2 H(+). Allows the formation of correctly charged Asn-tRNA(Asn) or Gln-tRNA(Gln) through the transamidation of misacylated Asp-tRNA(Asn) or Glu-tRNA(Gln) in organisms which lack either or both of asparaginyl-tRNA or glutaminyl-tRNA synthetases. The reaction takes place in the presence of glutamine and ATP through an activated phospho-Asp-tRNA(Asn) or phospho-Glu-tRNA(Gln). This is Aspartyl/glutamyl-tRNA(Asn/Gln) amidotransferase subunit B from Rhodopseudomonas palustris (strain ATCC BAA-98 / CGA009).